Consider the following 42-residue polypeptide: MEGLTKFLSSAPVLIMALLTFTAGILIEFNRFYPDLLFHPLG.

The chain crosses the membrane as a helical span at residues 7–27 (FLSSAPVLIMALLTFTAGILI).

It belongs to the PsaJ family.

Its subcellular location is the cellular thylakoid membrane. In terms of biological role, may help in the organization of the PsaE and PsaF subunits. The sequence is that of Photosystem I reaction center subunit IX from Microcystis aeruginosa (strain NIES-843 / IAM M-2473).